Reading from the N-terminus, the 153-residue chain is Nucleoside diphosphate kinase (153 aa).

N-acetylalanine is present on Ala2. ATP-binding residues include Lys13, Phe61, Arg89, Thr95, Arg106, and Asn116. His119 acts as the Pros-phosphohistidine intermediate in catalysis. Ser126 bears the Phosphoserine mark.

The protein belongs to the NDK family. In terms of assembly, homohexamer. The cofactor is Mg(2+).

The protein localises to the cytoplasm. The protein resides in the cytoskeleton. It catalyses the reaction a 2'-deoxyribonucleoside 5'-diphosphate + ATP = a 2'-deoxyribonucleoside 5'-triphosphate + ADP. The catalysed reaction is a ribonucleoside 5'-diphosphate + ATP = a ribonucleoside 5'-triphosphate + ADP. In terms of biological role, major role in the synthesis of nucleoside triphosphates other than ATP. The ATP gamma phosphate is transferred to the NDP beta phosphate via a ping-pong mechanism, using a phosphorylated active-site intermediate. The sequence is that of Nucleoside diphosphate kinase (awd) from Drosophila melanogaster (Fruit fly).